The sequence spans 416 residues: WD repeat-containing protein JIP5 (416 aa).

3 WD repeats span residues 9–48 (PLSSDLFSQAIHPTEPLVSIGLSSGHVQTFHLPAPSENGK), 62–101 (RHKGSCRCVGFGIDGETLYSAGTDGWVKAARTETGRVEWK), and 112–151 (GFQVDSPCLIHALSPQTLLLATDSGALHLFDLRDRSTEVS). Residues 149-183 (EVSARPQQTHHPHDDYVSSLTPLPPSETSTSGYSK) are disordered. Over residues 166-179 (SSLTPLPPSETSTS) the composition is skewed to low complexity. WD repeat units lie at residues 214 to 255 (ISSS…DQDE), 264 to 308 (DGGE…ISEL), and 309 to 348 (SHDDLEGVVGLGFDVQGRMISGGGTVVKVWHEAISDEEGN). 2 stretches are compositionally biased toward acidic residues: residues 343–359 (SDEEGNDDESDEEDIEN) and 374–383 (SDEEEDSDDD). Positions 343–416 (SDEEGNDDES…VHVMAFKGLD (74 aa)) are disordered. The span at 389-400 (KGKRKKRKRGKG) shows a compositional bias: basic residues.

It belongs to the WD repeat WDR55 family.

The protein localises to the nucleus. It localises to the nucleolus. The chain is WD repeat-containing protein JIP5 (JIP5) from Coccidioides immitis (strain RS) (Valley fever fungus).